The chain runs to 185 residues: Large ribosomal subunit protein uL5 (185 aa).

It belongs to the universal ribosomal protein uL5 family. In terms of assembly, part of the 50S ribosomal subunit; part of the 5S rRNA/L5/L18/L25 subcomplex. Contacts the 5S rRNA and the P site tRNA. Forms a bridge to the 30S subunit in the 70S ribosome.

In terms of biological role, this is one of the proteins that bind and probably mediate the attachment of the 5S RNA into the large ribosomal subunit, where it forms part of the central protuberance. In the 70S ribosome it contacts protein S13 of the 30S subunit (bridge B1b), connecting the 2 subunits; this bridge is implicated in subunit movement. Contacts the P site tRNA; the 5S rRNA and some of its associated proteins might help stabilize positioning of ribosome-bound tRNAs. The polypeptide is Large ribosomal subunit protein uL5 (Rhizobium etli (strain CIAT 652)).